Reading from the N-terminus, the 107-residue chain is ATP-dependent Clp protease adapter protein ClpS (107 aa).

The protein belongs to the ClpS family. As to quaternary structure, binds to the N-terminal domain of the chaperone ClpA.

Involved in the modulation of the specificity of the ClpAP-mediated ATP-dependent protein degradation. In Syntrophus aciditrophicus (strain SB), this protein is ATP-dependent Clp protease adapter protein ClpS.